Here is a 25-residue protein sequence, read N- to C-terminus: Antimicrobial peptide 2 (25 aa).

In terms of tissue distribution, expressed by the skin glands.

Its subcellular location is the secreted. Functionally, has very strong antibacterial activity against Gram-positive bacterium S.aureus and very weak activity against Gram-negative bacterium E.coli. This is Antimicrobial peptide 2 from Xenopus tropicalis (Western clawed frog).